Consider the following 418-residue polypeptide: Probable carboxypeptidase AO090166000075 (418 aa).

The signal sequence occupies residues 1–18 (MKATDLFHVTALVAGALA). Asn-74 carries an N-linked (GlcNAc...) asparagine glycan. Asp-147 contributes to the Zn(2+) binding site. Residue Asn-168 is glycosylated (N-linked (GlcNAc...) asparagine). Glu-179 (proton acceptor) is an active-site residue. Glu-180 is a Zn(2+) binding site.

Belongs to the peptidase M20A family. Zn(2+) serves as cofactor.

It is found in the secreted. The protein is Probable carboxypeptidase AO090166000075 of Aspergillus oryzae (strain ATCC 42149 / RIB 40) (Yellow koji mold).